Reading from the N-terminus, the 510-residue chain is Bifunctional purine biosynthesis protein PurH (510 aa).

Residues 1-144 (MSKRALISVT…KNYKDVIVVV (144 aa)) form the MGS-like domain.

This sequence belongs to the PurH family.

The catalysed reaction is (6R)-10-formyltetrahydrofolate + 5-amino-1-(5-phospho-beta-D-ribosyl)imidazole-4-carboxamide = 5-formamido-1-(5-phospho-D-ribosyl)imidazole-4-carboxamide + (6S)-5,6,7,8-tetrahydrofolate. It carries out the reaction IMP + H2O = 5-formamido-1-(5-phospho-D-ribosyl)imidazole-4-carboxamide. Its pathway is purine metabolism; IMP biosynthesis via de novo pathway; 5-formamido-1-(5-phospho-D-ribosyl)imidazole-4-carboxamide from 5-amino-1-(5-phospho-D-ribosyl)imidazole-4-carboxamide (10-formyl THF route): step 1/1. It participates in purine metabolism; IMP biosynthesis via de novo pathway; IMP from 5-formamido-1-(5-phospho-D-ribosyl)imidazole-4-carboxamide: step 1/1. The protein is Bifunctional purine biosynthesis protein PurH of Clostridioides difficile (strain 630) (Peptoclostridium difficile).